Here is a 104-residue protein sequence, read N- to C-terminus: U20-lycotoxin-Ls1a (104 aa).

Residues 1–30 (MFSTSDQVSKMNSRILSALLILGIATCVIA) form the signal peptide. The 46-residue stretch at 31 to 76 (GGFCPKSRHPQCNLSYKINDCCAQSDCRVGSVCCVEGCGNVCRAES) folds into the WAP domain. Disulfide bonds link C34–C64, C42–C68, C51–C63, C52–C90, and C57–C72.

Belongs to the venom protein 11 family. 02 (wap-2) subfamily. Post-translationally, contains 5 disulfide bonds. Expressed by the venom gland.

The protein resides in the secreted. Has antibacterial activity. This chain is U20-lycotoxin-Ls1a, found in Lycosa singoriensis (Wolf spider).